The sequence spans 152 residues: MDEQEIQRLVEEVSLQYFGMPFLHKAMFNSRLRTTGGRYLLNTHNIELNYRYYEMYGKEELVGIVKHELCHYHLHIAGRGYKHRDKDFRELLKAVDAPRFCKRMINEEKGKKVYMYECMECSLQYVRRRQINTKRYVCGKCKGKLILIKKTS.

The 142-residue stretch at 7–148 folds into the SprT-like domain; it reads QRLVEEVSLQ…GKCKGKLILI (142 aa). H67 contributes to the Zn(2+) binding site. E68 is an active-site residue. H71 lines the Zn(2+) pocket.

It belongs to the SprT family. The cofactor is Zn(2+).

It is found in the cytoplasm. This Bacillus cereus (strain AH187) protein is Protein SprT-like.